We begin with the raw amino-acid sequence, 296 residues long: Sulfotransferase 1C2 (296 aa).

49–54 (KAGTTW) lines the 3'-phosphoadenylyl sulfate pocket. 107–109 (KTH) provides a ligand contact to substrate. His109 serves as the catalytic Proton acceptor. 3'-phosphoadenylyl sulfate-binding positions include Arg131, Ser139, Tyr194, and 228–233 (TSFEKM). Ser139 is modified (phosphoserine). Ser254 carries the phosphoserine modification. Residue 256–260 (FMRKG) participates in 3'-phosphoadenylyl sulfate binding.

The protein belongs to the sulfotransferase 1 family. Found in adult stomach, kidney and thyroid gland, and in fetal kidney and liver.

The protein localises to the cytoplasm. It is found in the lysosome. The protein resides in the mitochondrion. It carries out the reaction a phenol + 3'-phosphoadenylyl sulfate = an aryl sulfate + adenosine 3',5'-bisphosphate + H(+). It catalyses the reaction cholesterol + 3'-phosphoadenylyl sulfate = cholesterol sulfate + adenosine 3',5'-bisphosphate + H(+). Its function is as follows. Sulfotransferase that utilizes 3'-phospho-5'-adenylyl sulfate (PAPS) to catalyze the sulfate conjugation of phenolic compounds. Does not transfer sulfate to steroids, dopamine, acetaminophen, or alpha-naphthol. Except in mitochondria, where it can add sulfate to cholesterol producing cholesterol sulfate, which alters mitochondrial membrane organization, and impacts protein complex mobility increasing state-III respiration, thereby modulating mitochondrial respiration. Catalyzes the sulfation of the carcinogenic N-hydroxy-2-acetylaminofluorene leading to highly reactive intermediates capable of forming DNA adducts, potentially resulting in mutagenesis. The sequence is that of Sulfotransferase 1C2 (SULT1C2) from Homo sapiens (Human).